Consider the following 155-residue polypeptide: Small ribosomal subunit protein uS7 (155 aa).

It belongs to the universal ribosomal protein uS7 family. As to quaternary structure, part of the 30S ribosomal subunit. Contacts proteins S9 and S11.

In terms of biological role, one of the primary rRNA binding proteins, it binds directly to 16S rRNA where it nucleates assembly of the head domain of the 30S subunit. Is located at the subunit interface close to the decoding center, probably blocks exit of the E-site tRNA. This is Small ribosomal subunit protein uS7 from Corynebacterium efficiens (strain DSM 44549 / YS-314 / AJ 12310 / JCM 11189 / NBRC 100395).